We begin with the raw amino-acid sequence, 124 residues long: S-adenosylmethionine decarboxylase proenzyme (124 aa).

Ser-63 serves as the catalytic Schiff-base intermediate with substrate; via pyruvic acid. The residue at position 63 (Ser-63) is a Pyruvic acid (Ser); by autocatalysis. His-68 (proton acceptor; for processing activity) is an active-site residue. Cys-83 (proton donor; for catalytic activity) is an active-site residue.

It belongs to the prokaryotic AdoMetDC family. Type 1 subfamily. As to quaternary structure, heterotetramer of two alpha and two beta chains arranged as a dimer of alpha/beta heterodimers. It depends on pyruvate as a cofactor. Is synthesized initially as an inactive proenzyme. Formation of the active enzyme involves a self-maturation process in which the active site pyruvoyl group is generated from an internal serine residue via an autocatalytic post-translational modification. Two non-identical subunits are generated from the proenzyme in this reaction, and the pyruvate is formed at the N-terminus of the alpha chain, which is derived from the carboxyl end of the proenzyme. The post-translation cleavage follows an unusual pathway, termed non-hydrolytic serinolysis, in which the side chain hydroxyl group of the serine supplies its oxygen atom to form the C-terminus of the beta chain, while the remainder of the serine residue undergoes an oxidative deamination to produce ammonia and the pyruvoyl group blocking the N-terminus of the alpha chain.

The enzyme catalyses S-adenosyl-L-methionine + H(+) = S-adenosyl 3-(methylsulfanyl)propylamine + CO2. The protein operates within amine and polyamine biosynthesis; S-adenosylmethioninamine biosynthesis; S-adenosylmethioninamine from S-adenosyl-L-methionine: step 1/1. In terms of biological role, catalyzes the decarboxylation of S-adenosylmethionine to S-adenosylmethioninamine (dcAdoMet), the propylamine donor required for the synthesis of the polyamines spermine and spermidine from the diamine putrescine. In Caldanaerobacter subterraneus subsp. tengcongensis (strain DSM 15242 / JCM 11007 / NBRC 100824 / MB4) (Thermoanaerobacter tengcongensis), this protein is S-adenosylmethionine decarboxylase proenzyme.